Consider the following 251-residue polypeptide: Vitamin B12 import ATP-binding protein BtuD (251 aa).

The ABC transporter domain occupies 2-236 (IRVNSLQVDS…EVLQSVFGTS (235 aa)). 30 to 37 (GPNGCGKS) provides a ligand contact to ATP.

It belongs to the ABC transporter superfamily. Vitamin B12 importer (TC 3.A.1.13.1) family. As to quaternary structure, the complex is composed of two ATP-binding proteins (BtuD), two transmembrane proteins (BtuC) and a solute-binding protein (BtuF).

Its subcellular location is the cell inner membrane. The enzyme catalyses an R-cob(III)alamin(out) + ATP + H2O = an R-cob(III)alamin(in) + ADP + phosphate + H(+). Part of the ABC transporter complex BtuCDF involved in vitamin B12 import. Responsible for energy coupling to the transport system. The chain is Vitamin B12 import ATP-binding protein BtuD from Vibrio cholerae serotype O1 (strain ATCC 39541 / Classical Ogawa 395 / O395).